Reading from the N-terminus, the 491-residue chain is Glutamate--tRNA ligase (491 aa).

Positions 13–23 (PSPTGFLHIGN) match the 'HIGH' region motif. The Zn(2+) site is built by Cys110, Cys112, Cys137, and His139. Residues 254 to 258 (KLSKR) carry the 'KMSKS' region motif. An ATP-binding site is contributed by Lys257.

This sequence belongs to the class-I aminoacyl-tRNA synthetase family. Glutamate--tRNA ligase type 1 subfamily. In terms of assembly, monomer. Requires Zn(2+) as cofactor.

It is found in the cytoplasm. It catalyses the reaction tRNA(Glu) + L-glutamate + ATP = L-glutamyl-tRNA(Glu) + AMP + diphosphate. Catalyzes the attachment of glutamate to tRNA(Glu) in a two-step reaction: glutamate is first activated by ATP to form Glu-AMP and then transferred to the acceptor end of tRNA(Glu). The chain is Glutamate--tRNA ligase from Listeria monocytogenes serovar 1/2a (strain ATCC BAA-679 / EGD-e).